Here is a 344-residue protein sequence, read N- to C-terminus: Protein RecA (344 aa).

Position 64-71 (Gly-64–Thr-71) interacts with ATP.

This sequence belongs to the RecA family.

The protein resides in the cytoplasm. Functionally, can catalyze the hydrolysis of ATP in the presence of single-stranded DNA, the ATP-dependent uptake of single-stranded DNA by duplex DNA, and the ATP-dependent hybridization of homologous single-stranded DNAs. It interacts with LexA causing its activation and leading to its autocatalytic cleavage. This is Protein RecA from Paramagnetospirillum magnetotacticum (Aquaspirillum magnetotacticum).